A 310-amino-acid chain; its full sequence is 26S proteasome non-ATPase regulatory subunit 14 (310 aa).

Residues 31–166 (VYISSLALLK…IDAFRLINAN (136 aa)) enclose the MPN domain. Residues His113, His115, and Asp126 each contribute to the Zn(2+) site. Residues 113–126 (HSHPGFGCWLSGVD) carry the JAMM motif motif. Residues Ser150 and Ser224 each carry the phosphoserine modification. Residue Thr266 is modified to Phosphothreonine.

This sequence belongs to the peptidase M67A family. PSMD14 subfamily. In terms of assembly, component of the 19S proteasome regulatory particle complex. The 26S proteasome consists of a 20S core particle (CP) and two 19S regulatory subunits (RP). The regulatory particle is made of a lid composed of 9 subunits including PSMD4, a base containing 6 ATPases and few additional components. Within the complex, PSMD4 interacts with subunit PSMD7 through their respective MPN domain. Interacts with TXNL1. Widely expressed. Highest levels in heart and skeletal muscle.

Functionally, component of the 26S proteasome, a multiprotein complex involved in the ATP-dependent degradation of ubiquitinated proteins. This complex plays a key role in the maintenance of protein homeostasis by removing misfolded or damaged proteins, which could impair cellular functions, and by removing proteins whose functions are no longer required. Therefore, the proteasome participates in numerous cellular processes, including cell cycle progression, apoptosis, or DNA damage repair. The PSMD14 subunit is a metalloprotease that specifically cleaves 'Lys-63'-linked polyubiquitin chains within the complex. Plays a role in response to double-strand breaks (DSBs): acts as a regulator of non-homologous end joining (NHEJ) by cleaving 'Lys-63'-linked polyubiquitin, thereby promoting retention of JMJD2A/KDM4A on chromatin and restricting TP53BP1 accumulation. Also involved in homologous recombination repair by promoting RAD51 loading. The chain is 26S proteasome non-ATPase regulatory subunit 14 (PSMD14) from Homo sapiens (Human).